Consider the following 306-residue polypeptide: Porphobilinogen deaminase (306 aa).

An S-(dipyrrolylmethanemethyl)cysteine modification is found at Cys-237.

Belongs to the HMBS family. As to quaternary structure, monomer. Requires dipyrromethane as cofactor.

The catalysed reaction is 4 porphobilinogen + H2O = hydroxymethylbilane + 4 NH4(+). It participates in porphyrin-containing compound metabolism; protoporphyrin-IX biosynthesis; coproporphyrinogen-III from 5-aminolevulinate: step 2/4. Tetrapolymerization of the monopyrrole PBG into the hydroxymethylbilane pre-uroporphyrinogen in several discrete steps. The chain is Porphobilinogen deaminase from Syntrophus aciditrophicus (strain SB).